The sequence spans 763 residues: Phosphoglycerol transferase I (763 aa).

The next 4 membrane-spanning stretches (helical) occupy residues 1-21 (MSEL…AWKA), 26-46 (WWFA…ITLF), 77-97 (ILPG…LGWI), and 108-128 (FGYS…SPAF).

The protein belongs to the OpgB family.

Its subcellular location is the cell inner membrane. It catalyses the reaction a phosphatidylglycerol + a membrane-derived-oligosaccharide D-glucose = a 1,2-diacyl-sn-glycerol + a membrane-derived-oligosaccharide 6-(glycerophospho)-D-glucose.. The protein operates within glycan metabolism; osmoregulated periplasmic glucan (OPG) biosynthesis. Functionally, transfers a phosphoglycerol residue from phosphatidylglycerol to the membrane-bound nascent glucan backbones. The chain is Phosphoglycerol transferase I from Escherichia coli O7:K1 (strain IAI39 / ExPEC).